A 196-amino-acid chain; its full sequence is MAENSAATPAAKPKRSKALKKSTDHPKYSDMILAAVQAEKSRSGSSRQSIQKYIKNHYKVGENADSQIKLSIKRLVTSGALKQTKGVGASGSFRLAKADEGKKPAKKPKKEIKKAVSPKKVAKPKKAAKSPAKAKKPKVAEKKVKKVAKKKPAPSPKKAKKTKTVKAKPVRASKVKKAKPSKPKAKASPKKSGRKK.

Disordered stretches follow at residues 1–29 (MAEN…PKYS) and 86–196 (GVGA…GRKK). The 74-residue stretch at 24 to 97 (DHPKYSDMIL…GASGSFRLAK (74 aa)) folds into the H15 domain. A compositionally biased stretch (basic residues) spans 104–196 (PAKKPKKEIK…ASPKKSGRKK (93 aa)).

This sequence belongs to the histone H1/H5 family.

The protein localises to the nucleus. The protein resides in the chromosome. In terms of biological role, histones H1 are necessary for the condensation of nucleosome chains into higher-order structures. The histones H1.0 are found in cells that are in terminal stages of differentiation or that have low rates of cell division. The chain is Histone H1.0-B (h1-0-b) from Xenopus laevis (African clawed frog).